Here is a 1310-residue protein sequence, read N- to C-terminus: Clustered mitochondria protein homolog (1310 aa).

Residues D375 to Q619 form the Clu domain. Positions K662–G682 are enriched in basic and acidic residues. Disordered stretches follow at residues K662–L692 and V931–V960. TPR repeat units lie at residues A1033–T1066, I1075–I1108, and I1117–L1150. Disordered stretches follow at residues V1245–S1266 and G1281–A1310.

It belongs to the CLU family. In terms of assembly, may associate with the eukaryotic translation initiation factor 3 (eIF-3) complex.

It localises to the cytoplasm. Its function is as follows. mRNA-binding protein involved in proper cytoplasmic distribution of mitochondria. This Aspergillus fumigatus (strain CBS 144.89 / FGSC A1163 / CEA10) (Neosartorya fumigata) protein is Clustered mitochondria protein homolog.